Consider the following 484-residue polypeptide: MPSILDLPIGTGATGKRKESDSLGEVEVPADHYWGAQTQRSLIHFSIGDDYMPKEVYHAYGYVKKAAALVNEAAGIIPPWKAELIARVADEVIAGKLDSEFPLYVWQTGSGTQSNMNVNEVISNRAIQLVGGSLGSKHPVHPNDDVNMSQSSNDTFPTAMHIATVLEFSNRLIPAVTVLEESIWAKAREWVDIVKIGRTHLQDATPLTVGQEWSGYATQLDDALAFVKHSLRGLYRLAIGGTAVGTGINTPPDFGEKVADEIARLTGHPFVTAPNKFAAQGSLDAMVTSSAALRTLAVALMKIANDLQWLGSGPRSGLHELILPSDEPGSSIMPGKVNPTQEEAMLMVCIQVIGEDNAVAFAGSQGNFELNAMCPIIINNVLHSARTLGDACVKFREYGINGIMLDRSRIDKFVGTSLMLVTALSPVIGYDKASAIVQRALDENTTLREAAVKGGFISAEDFDRIVDPKKMVGDPRHDLKLASE.

Positions 1-22 (MPSILDLPIGTGATGKRKESDS) are disordered. Substrate-binding positions include 110-112 (SGT), 141-144 (HPND), 151-153 (SSN), and T199. H200 serves as the catalytic Proton donor/acceptor. Residue S330 is part of the active site. Residues S331 and 336–338 (KVN) each bind substrate.

The protein belongs to the class-II fumarase/aspartase family. Fumarase subfamily. Homotetramer.

The protein resides in the cytoplasm. The enzyme catalyses (S)-malate = fumarate + H2O. The protein operates within carbohydrate metabolism; tricarboxylic acid cycle; (S)-malate from fumarate: step 1/1. Its function is as follows. Involved in the TCA cycle. Catalyzes the stereospecific interconversion of fumarate to L-malate. This chain is Fumarate hydratase class II, found in Methanosarcina acetivorans (strain ATCC 35395 / DSM 2834 / JCM 12185 / C2A).